The chain runs to 200 residues: MELVVKGADALTVSETTFGRDFNEALVHQVVVAYAAGARQGTRAQKTRSDVSGGGAKPWRQKGTGRARAGTIRSPLWRTGGVTFAARPQDHSQKVNKKMYRGAMKSILSELVRQERLIVVDNFSVEAPKTKELAAKLKELDLSDVLIVTGELDENLFLAARNLYKVDVRDAATIDPVSLIAFDKIVMTAAAVKQVEEMLA.

Residues 42 to 65 (TRAQKTRSDVSGGGAKPWRQKGTG) form a disordered region.

This sequence belongs to the universal ribosomal protein uL4 family. As to quaternary structure, part of the 50S ribosomal subunit.

In terms of biological role, one of the primary rRNA binding proteins, this protein initially binds near the 5'-end of the 23S rRNA. It is important during the early stages of 50S assembly. It makes multiple contacts with different domains of the 23S rRNA in the assembled 50S subunit and ribosome. Forms part of the polypeptide exit tunnel. This is Large ribosomal subunit protein uL4 from Photobacterium profundum (strain SS9).